The following is a 691-amino-acid chain: DNA ligase (691 aa).

NAD(+) contacts are provided by residues 41–45, 90–91, and glutamate 130; these read DAEYD and SL. The N6-AMP-lysine intermediate role is filled by lysine 132. Residues arginine 153, glutamate 190, lysine 307, and lysine 331 each contribute to the NAD(+) site. The Zn(2+) site is built by cysteine 425, cysteine 428, cysteine 443, and cysteine 449. A BRCT domain is found at 610–691; it reads APQGVLAGKT…MHTLLEGHAR (82 aa).

It belongs to the NAD-dependent DNA ligase family. LigA subfamily. Mg(2+) serves as cofactor. Mn(2+) is required as a cofactor.

It catalyses the reaction NAD(+) + (deoxyribonucleotide)n-3'-hydroxyl + 5'-phospho-(deoxyribonucleotide)m = (deoxyribonucleotide)n+m + AMP + beta-nicotinamide D-nucleotide.. In terms of biological role, DNA ligase that catalyzes the formation of phosphodiester linkages between 5'-phosphoryl and 3'-hydroxyl groups in double-stranded DNA using NAD as a coenzyme and as the energy source for the reaction. It is essential for DNA replication and repair of damaged DNA. The chain is DNA ligase from Burkholderia pseudomallei (strain 1710b).